Consider the following 1272-residue polypeptide: Myosin-3 (1272 aa).

The segment at 1–20 (MAVIKKGARRKDVKEPKKRS) is disordered. The region spanning 36–715 (VGISDLTLLS…SLFALEDMRD (680 aa)) is the Myosin motor domain. 129–136 (GESGAGKT) lines the ATP pocket. The residue at position 357 (S357) is a Phosphoserine. The tract at residues 588–610 (ANELVETLSKAEPSYIRTIKPNQ) is actin-binding. 2 consecutive IQ domains span residues 719-739 (YNMAARIQRAWRRFLQRRIDA) and 740-765 (AIKIQRTIREKKGGNKYVKLRDYGTK). Positions 771 to 961 (KERRSMSLLG…TIYVRRGHPA (191 aa)) constitute a TH1 domain. Disordered stretches follow at residues 951–1015 (STIY…QKPV), 1029–1141 (YNPK…SELP), and 1217–1272 (VQFG…DDDW). Over residues 980 to 1000 (IKSKKSKHKSTHKHTHSHRSH) the composition is skewed to basic residues. The segment covering 1066–1078 (KKASSSHKSSSAK) has biased composition (low complexity). A compositionally biased stretch (basic and acidic residues) spans 1089-1098 (GVEKNKEPLK). Positions 1109–1118 (PIPPPPPPMG) are enriched in pro residues. One can recognise an SH3 domain in the interval 1120–1182 (PKDPKFEAAY…PTAYMTPYKD (63 aa)). Residues 1217–1236 (VQFGSATVGPTSDNQSNPVG) show a composition bias toward polar residues. The span at 1258 to 1272 (ADDDDNDDGDDDDDW) shows a compositional bias: acidic residues.

Belongs to the TRAFAC class myosin-kinesin ATPase superfamily. Myosin family. As to quaternary structure, interacts (via myosin motor domain) with SHE4; this interaction is important for proper localization and may regulate the interaction of the motor domain with actin. Interacts (via SH3 domain) with VRP1; this interaction is required for localization to sites of polarized growth and may regulate the interaction of the tail domain with actin. Interacts (via SH3 domain) with PAN1; this interaction is important for late stages of endocytopsis. Interacts (via SH3 domain) with BBC1 and LAS17. Interacts (via C-terminal acidic tail) with ARC19 and ARC40; ARC19 and ARC40 are Arp2/3 complex subunits. In terms of processing, phosphorylation of the TEDS site (Ser-357) is required for the polarization of the actin cytoskeleton and for ligand-induced, but not for constitutive internalization of STE2. Phosphorylation probably activates the myosin-I ATPase. Ser-357 is phosphorylated by CLA4 and STE20 in vitro.

It is found in the cytoplasm. The protein localises to the cytoskeleton. Its subcellular location is the actin patch. Its function is as follows. One of two redundant type-I myosins implicated in the organization of the actin cytoskeleton. Required for proper actin cytoskeleton polarization and for the internalization step in endocytosis. At the cell cortex, assembles in patch-like structures together with proteins from the actin-polymerizing machinery and promotes actin assembly. Functions redundantly with LAS17 as actin nucleation-promoting factor (NPF) for the Arp2/3 complex. Motor domain phosphorylation by PAK kinases CLA4 and STE20 promotes CDC42-regulated actin assembly. Functions together with the NPF PAN1 in late stages of endocytosis. Motor domain phosphorylation by PDK1 kinases PKH1 and PKH2, and by SGK kinases YPK1 and YPK2, promotes ligand-induced, but not constitutive endocytosis of the G protein-coupled receptor STE2. The chain is Myosin-3 (MYO3) from Saccharomyces cerevisiae (strain ATCC 204508 / S288c) (Baker's yeast).